The sequence spans 257 residues: Pyridoxal phosphate homeostasis protein (257 aa).

Position 47 is an N6-(pyridoxal phosphate)lysine (K47).

This sequence belongs to the pyridoxal phosphate-binding protein YggS/PROSC family.

Its function is as follows. Pyridoxal 5'-phosphate (PLP)-binding protein, which is involved in PLP homeostasis. In Mycobacterium leprae (strain TN), this protein is Pyridoxal phosphate homeostasis protein.